The chain runs to 659 residues: tRNA 5-methylaminomethyl-2-thiouridine biosynthesis bifunctional protein MnmC (659 aa).

Positions 1–236 (MKPVMPHAQL…KWEILRGEFL (236 aa)) are tRNA (mnm(5)s(2)U34)-methyltransferase. The segment at 267-659 (IGAGLAGCAT…FALRRLIRGK (393 aa)) is FAD-dependent cmnm(5)s(2)U34 oxidoreductase.

The protein in the N-terminal section; belongs to the methyltransferase superfamily. tRNA (mnm(5)s(2)U34)-methyltransferase family. This sequence in the C-terminal section; belongs to the DAO family. FAD is required as a cofactor.

The protein resides in the cytoplasm. The catalysed reaction is 5-aminomethyl-2-thiouridine(34) in tRNA + S-adenosyl-L-methionine = 5-methylaminomethyl-2-thiouridine(34) in tRNA + S-adenosyl-L-homocysteine + H(+). Functionally, catalyzes the last two steps in the biosynthesis of 5-methylaminomethyl-2-thiouridine (mnm(5)s(2)U) at the wobble position (U34) in tRNA. Catalyzes the FAD-dependent demodification of cmnm(5)s(2)U34 to nm(5)s(2)U34, followed by the transfer of a methyl group from S-adenosyl-L-methionine to nm(5)s(2)U34, to form mnm(5)s(2)U34. This chain is tRNA 5-methylaminomethyl-2-thiouridine biosynthesis bifunctional protein MnmC, found in Pseudomonas fluorescens (strain Pf0-1).